The chain runs to 282 residues: Deoxyribonuclease-1 (282 aa).

The N-terminal stretch at 1–20 is a signal peptide; it reads MARLVLELLAAALLLRVAAT. A glycan (N-linked (GlcNAc...) asparagine) is linked at N38. E98 is a catalytic residue. C121 and C124 form a disulfide bridge. H154 is an active-site residue. An intrachain disulfide couples C193 to C229.

It belongs to the DNase I family. Requires Ca(2+) as cofactor. Mg(2+) serves as cofactor. In terms of processing, N-glycosylated.

The protein resides in the secreted. Its subcellular location is the zymogen granule. It is found in the nucleus envelope. It carries out the reaction Endonucleolytic cleavage to 5'-phosphodinucleotide and 5'-phosphooligonucleotide end-products.. Functionally, serum endocuclease secreted into body fluids by a wide variety of exocrine and endocrine organs. Expressed by non-hematopoietic tissues and preferentially cleaves protein-free DNA. Among other functions, seems to be involved in cell death by apoptosis. Binds specifically to G-actin and blocks actin polymerization. This Gallus gallus (Chicken) protein is Deoxyribonuclease-1 (DNASE1).